The primary structure comprises 603 residues: Probable potassium transport system protein Kup (603 aa).

12 helical membrane passes run 15–35 (GLVF…IFLL), 43–63 (IIGV…VEYA), 94–114 (VAFV…DGVI), 135–155 (NIGQ…LFSV), 163–183 (ITWV…FSGI), 209–229 (GIIG…GEAL), 244–264 (AWRF…AFLI), 283–303 (ILYI…SQAM), 336–356 (IYIS…MLIF), 365–385 (AYGL…TSIF), 390–410 (NITK…FLLS), and 415–435 (IPHG…LILI).

It belongs to the HAK/KUP transporter (TC 2.A.72) family.

The protein resides in the cell membrane. It carries out the reaction K(+)(in) + H(+)(in) = K(+)(out) + H(+)(out). In terms of biological role, transport of potassium into the cell. Likely operates as a K(+):H(+) symporter. The polypeptide is Probable potassium transport system protein Kup (Methanosarcina barkeri (strain Fusaro / DSM 804)).